A 304-amino-acid polypeptide reads, in one-letter code: Methionyl-tRNA formyltransferase (304 aa).

(6S)-5,6,7,8-tetrahydrofolate is bound at residue 109–112 (SDLP).

The protein belongs to the Fmt family.

The enzyme catalyses L-methionyl-tRNA(fMet) + (6R)-10-formyltetrahydrofolate = N-formyl-L-methionyl-tRNA(fMet) + (6S)-5,6,7,8-tetrahydrofolate + H(+). Its function is as follows. Attaches a formyl group to the free amino group of methionyl-tRNA(fMet). The formyl group appears to play a dual role in the initiator identity of N-formylmethionyl-tRNA by promoting its recognition by IF2 and preventing the misappropriation of this tRNA by the elongation apparatus. This is Methionyl-tRNA formyltransferase from Rickettsia bellii (strain RML369-C).